Here is a 733-residue protein sequence, read N- to C-terminus: Forkhead box protein K1 (733 aa).

A2 is subject to N-acetylalanine. The interval 2-40 (AEVGEDSGARALLALRSAPCSPVLCAAAAAAAFPAAAPP) is interaction with SIN3A and SIN3B. The disordered stretch occupies residues 36-79 (AAAPPPAPAQPQPPPGPPPPPPPPLPPGAIAGAGSSGGSSGVSG). Over residues 37 to 62 (AAPPPAPAQPQPPPGPPPPPPPPLPP) the composition is skewed to pro residues. Residues 95–420 (AASVRQSPGP…PLSSRSAPAS (326 aa)) are required for interaction with FOXO4 and MEF2C. The residue at position 101 (S101) is a Phosphoserine. The FHA domain occupies 123 to 175 (VTIGRNSSQGSVDLSMGLSSFISRRHLQLSFQEPHFYLRCLGKNGVFVDGAFQ). R161 and R191 each carry omega-N-methylarginine. Phosphoserine occurs at positions 213, 223, 239, and 243. Phosphothreonine occurs at positions 245 and 247. Phosphoserine is present on residues S253, S257, S295, and S299. Disordered regions lie at residues 287–306 (ASEQQADTSGGDSPKDESKP) and 413–436 (SSRSAPASPTHPGLMSPRSGGLQT). Positions 305–400 (KPPFSYAQLI…EQAFRKRRQR (96 aa)) form a DNA-binding region, fork-head. A phosphoserine mark is found at S416 and S420. Position 422 is a phosphothreonine (T422). S428 carries the post-translational modification Phosphoserine. Phosphothreonine is present on T436. Residues S441, S445, and S459 each carry the phosphoserine modification. The segment covering 676–697 (VAATATTTPATATTASASASST) has biased composition (low complexity). The disordered stretch occupies residues 676–733 (VAATATTTPATATTASASASSTGEPEVKRSRVEEPSGAVTTPAGVIAAAGPQGPGTGE). A compositionally biased stretch (basic and acidic residues) spans 700–709 (PEVKRSRVEE).

Interacts with SIN3A and SIN3B (via PAH2) to form a complex which represses transcription. Component of SIN3A-, but not SIN3B-, containing multiprotein complexes. Interacts with FOXO4 and MEF2C; both interactions inhibit FOXO4 and MEF2C transactivation activity. Interacts (when phosphorylated) with YWHAE/14-3-3-epsilon; promotes sequestration in the cytoplasm and leads to impaired ability to bind DNA. Interacts with FHL2. Interacts with SRF. Interacts with DVL2 and DVL3; the interaction induces DVL2 nuclear translocation. Interacts with BAP1 (when phosphorylated). Accessory component of the polycomb repressive deubiquitinase (PR-DUB) complex, at least composed of BAP1, one of ASXL1, ASXL2 or (probably) ASXL3 and one of MBD5 or MBD6. The PR-DUB core associates with a number of accessory proteins, including FOXK1, FOXK2, KDM1B, HCFC1 and OGT. Post-translationally, phosphorylation by GSK3 (GSK3A or GSK3B) promotes interaction with YWHAE/14-3-3-epsilon and retention in the cytoplasm. In response to mTORC1 signaling, phosphorylation by GSK3 is prevented, leading to translocation to the nucleus. Expressed both developing and adult tissues. In adults, significant expression is seen in tumors of the brain, colon and lymph node.

It localises to the nucleus. It is found in the cytoplasm. In terms of biological role, transcriptional regulator involved in different processes such as glucose metabolism, aerobic glycolysis, muscle cell differentiation and autophagy. Recognizes and binds the forkhead DNA sequence motif (5'-GTAAACA-3') and can both act as a transcription activator or repressor, depending on the context. Together with FOXK2, acts as a key regulator of metabolic reprogramming towards aerobic glycolysis, a process in which glucose is converted to lactate in the presence of oxygen. Acts by promoting expression of enzymes for glycolysis (such as hexokinase-2 (HK2), phosphofructokinase, pyruvate kinase (PKLR) and lactate dehydrogenase), while suppressing further oxidation of pyruvate in the mitochondria by up-regulating pyruvate dehydrogenase kinases PDK1 and PDK4. Probably plays a role in gluconeogenesis during overnight fasting, when lactate from white adipose tissue and muscle is the main substrate. Involved in mTORC1-mediated metabolic reprogramming: in response to mTORC1 signaling, translocates into the nucleus and regulates the expression of genes associated with glycolysis and downstream anabolic pathways, such as HIF1A, thereby regulating glucose metabolism. Together with FOXK2, acts as a negative regulator of autophagy in skeletal muscle: in response to starvation, enters the nucleus, binds the promoters of autophagy genes and represses their expression, preventing proteolysis of skeletal muscle proteins. Acts as a transcriptional regulator of the myogenic progenitor cell population in skeletal muscle. Binds to the upstream enhancer region (CCAC box) of myoglobin (MB) gene, regulating the myogenic progenitor cell population. Promotes muscle progenitor cell proliferation by repressing the transcriptional activity of FOXO4, thereby inhibiting myogenic differentiation. Involved in remodeling processes of adult muscles that occur in response to physiological stimuli. Required to correct temporal orchestration of molecular and cellular events necessary for muscle repair. Represses myogenic differentiation by inhibiting MEFC activity. Positively regulates Wnt/beta-catenin signaling by translocating DVL into the nucleus. Reduces virus replication, probably by binding the interferon stimulated response element (ISRE) to promote antiviral gene expression. Accessory component of the polycomb repressive deubiquitinase (PR-DUB) complex; recruits the PR-DUB complex to specific FOXK1-bound genes. This chain is Forkhead box protein K1, found in Homo sapiens (Human).